Here is a 901-residue protein sequence, read N- to C-terminus: Quinate repressor protein (901 aa).

Residues 1–88 (MSILVRPPKR…DSLQTRRKFP (88 aa)) are sufficient for repression. Disordered stretches follow at residues 26–59 (LRDFGQGNSASTPINTSADYGRFDERPGSGDGSR) and 878–901 (EEQGEEYDQSAMRTRLENLDGQPM). Polar residues predominate over residues 31–43 (QGNSASTPINTSA).

In the N-terminal section; belongs to the shikimate kinase family. This sequence in the 2nd section; belongs to the type-I 3-dehydroquinase family. The protein in the C-terminal section; belongs to the shikimate dehydrogenase family. As to quaternary structure, interacts with qutA; transcriptional activator of the quinate utilization pathway genes.

In terms of biological role, multi-domain repressor protein that negatively regulates transcription of the quinate utilization pathway genes. May mediate its repressor activity by binding directly to the qutA activator protein. This chain is Quinate repressor protein (qutR), found in Emericella nidulans (strain FGSC A4 / ATCC 38163 / CBS 112.46 / NRRL 194 / M139) (Aspergillus nidulans).